The chain runs to 610 residues: Sterol O-acyltransferase 1 (610 aa).

Residues serine 21 and serine 45 each carry the phosphoserine modification. The interval 41–81 (SMEVSPRSSTTSLVEPVESTEGVESTEAERVAGKQEQEEEY) is disordered. Positions 67 to 76 (EAERVAGKQE) are enriched in basic and acidic residues. The next 5 membrane-spanning stretches (helical) occupy residues 182 to 202 (LESNFSGIYVFAWMFLGWIAI), 229 to 249 (LFTIAMLDLAMFLCTFFVVFV), 264 to 284 (GFVAVSIFELAFIPVTFPIYV), 371 to 391 (ISCSNFFMFCLFPVLVYQINY), and 409 to 429 (IIGTIFLMMVTAQFFMHPVAM). The FYXDWWN motif motif lies at 491–497 (FYGDWWN). A run of 2 helical transmembrane segments spans residues 535 to 555 (ATLFTFFLSAVFHEMAMFAIF) and 590 to 610 (VVFSFGVCSGPSIIMTLYLTL). Residue histidine 547 is part of the active site.

Belongs to the membrane-bound acyltransferase family. Sterol o-acyltransferase subfamily.

It localises to the endoplasmic reticulum membrane. It catalyses the reaction lanosterol + an acyl-CoA = lanosteryl ester + CoA. In terms of biological role, sterol O-acyltransferase that catalyzes the formation of stery esters. In Saccharomyces cerevisiae (strain ATCC 204508 / S288c) (Baker's yeast), this protein is Sterol O-acyltransferase 1.